Here is a 923-residue protein sequence, read N- to C-terminus: Transportin-3 (923 aa).

Position 1 is an N-acetylmethionine (Met1). Ser74 carries the post-translational modification Phosphoserine. Thr896 bears the Phosphothreonine mark.

Interacts with (GTP-bound) Ran. Interacts with (phosphorylated) SFRS1 and SFRS2; leading to their nuclear import. Interacts with NUP62. Interacts with RBM4. Interacts with CPSF6, promoting its nuclear import. As to quaternary structure, (Microbial infection) Interacts with the HIV-1 pre-integration complex (PIC), which is composed of viral genome, matrix protein, Vpr and integrase. Interacts with HIV-1 integrase protein; the interaction is direct. In terms of tissue distribution, expressed in skeletal muscle.

The protein resides in the nucleus envelope. It is found in the cytoplasm. Functionally, importin, which transports target proteins into the nucleus. Specifically mediates the nuclear import of splicing factor serine/arginine (SR) proteins, such as RBM4, SFRS1 and SFRS2, by recognizing phosphorylated SR domains. Also mediates the nuclear import of serine/arginine (SR) protein CPSF6, independently of CPSF6 phosphorylation. The nuclear import process is regulated by the small GTPase Ran that partitions between cytoplasm and nucleus in the predominantly GDP- and GTP-bound form, respectively. Importin associates with target cargo proteins in the cytoplasm, and the competitive binding of GTP-bound Ran induces the release of cargos in the nucleus. (Microbial infection) Involved in immunodeficiency virus (HIV-1) infection by importing the pre-integration complex (PIC) into the nucleus. Required for a nuclear maturation step of HIV-1 prior to integration. This Homo sapiens (Human) protein is Transportin-3.